Reading from the N-terminus, the 261-residue chain is Hydroxyethylthiazole kinase (261 aa).

M45 provides a ligand contact to substrate. Residues R121 and S167 each contribute to the ATP site. G194 is a substrate binding site.

It belongs to the Thz kinase family. It depends on Mg(2+) as a cofactor.

The catalysed reaction is 5-(2-hydroxyethyl)-4-methylthiazole + ATP = 4-methyl-5-(2-phosphooxyethyl)-thiazole + ADP + H(+). The protein operates within cofactor biosynthesis; thiamine diphosphate biosynthesis; 4-methyl-5-(2-phosphoethyl)-thiazole from 5-(2-hydroxyethyl)-4-methylthiazole: step 1/1. In terms of biological role, catalyzes the phosphorylation of the hydroxyl group of 4-methyl-5-beta-hydroxyethylthiazole (THZ). In Vibrio atlanticus (strain LGP32) (Vibrio splendidus (strain Mel32)), this protein is Hydroxyethylthiazole kinase.